Here is a 158-residue protein sequence, read N- to C-terminus: Secreted RxLR effector protein 2 (158 aa).

A signal peptide spans 1 to 21 (MRLLLWVLLVTLVTFLSSGDA). The short motif at 54–75 (RFLRGDRSNIVNLKDGDENEER) is the RxLR-dEER element.

The protein belongs to the RxLR effector family.

The protein localises to the secreted. The protein resides in the host cell. Its function is as follows. Secreted effector that completely suppresses elicitor-induced cell death in host and enhances virulence of P.parasitica. This is Secreted RxLR effector protein 2 from Phytophthora nicotianae (Potato buckeye rot agent).